The following is a 383-amino-acid chain: S-adenosylmethionine synthase (383 aa).

Residue His15 participates in ATP binding. Mg(2+) is bound at residue Asp17. Glu43 contacts K(+). L-methionine-binding residues include Glu56 and Gln99. Residues 99 to 109 form a flexible loop region; sequence QSPDINQGVDR. Residues 164 to 166, 230 to 231, Asp239, 245 to 246, Ala262, and Lys266 contribute to the ATP site; these read DAK, RF, and RK. Position 239 (Asp239) interacts with L-methionine. Position 270 (Lys270) interacts with L-methionine.

The protein belongs to the AdoMet synthase family. In terms of assembly, homotetramer; dimer of dimers. Requires Mg(2+) as cofactor. K(+) serves as cofactor.

Its subcellular location is the cytoplasm. It carries out the reaction L-methionine + ATP + H2O = S-adenosyl-L-methionine + phosphate + diphosphate. It participates in amino-acid biosynthesis; S-adenosyl-L-methionine biosynthesis; S-adenosyl-L-methionine from L-methionine: step 1/1. Its function is as follows. Catalyzes the formation of S-adenosylmethionine (AdoMet) from methionine and ATP. The overall synthetic reaction is composed of two sequential steps, AdoMet formation and the subsequent tripolyphosphate hydrolysis which occurs prior to release of AdoMet from the enzyme. The chain is S-adenosylmethionine synthase from Shewanella sp. (strain ANA-3).